We begin with the raw amino-acid sequence, 383 residues long: Probable protein phosphatase 2C 13 (383 aa).

The region spanning 78-349 is the PPM-type phosphatase domain; it reads RSGSFADIRS…DNMTVIVICF (272 aa). Mn(2+)-binding residues include Asp121, Gly122, Asp297, and Asp340.

Belongs to the PP2C family. Mg(2+) is required as a cofactor. Mn(2+) serves as cofactor.

It catalyses the reaction O-phospho-L-seryl-[protein] + H2O = L-seryl-[protein] + phosphate. The catalysed reaction is O-phospho-L-threonyl-[protein] + H2O = L-threonyl-[protein] + phosphate. This is Probable protein phosphatase 2C 13 from Arabidopsis thaliana (Mouse-ear cress).